The following is a 401-amino-acid chain: Mannonate dehydratase (401 aa).

This sequence belongs to the mannonate dehydratase family. Fe(2+) is required as a cofactor. Requires Mn(2+) as cofactor.

It carries out the reaction D-mannonate = 2-dehydro-3-deoxy-D-gluconate + H2O. It participates in carbohydrate metabolism; pentose and glucuronate interconversion. Catalyzes the dehydration of D-mannonate. The sequence is that of Mannonate dehydratase from Brucella melitensis biotype 2 (strain ATCC 23457).